Here is a 515-residue protein sequence, read N- to C-terminus: Maturase K (515 aa).

This sequence belongs to the intron maturase 2 family. MatK subfamily.

It is found in the plastid. Its subcellular location is the chloroplast. Usually encoded in the trnK tRNA gene intron. Probably assists in splicing its own and other chloroplast group II introns. In Pinus pinea (Italian stone pine), this protein is Maturase K.